The following is a 413-amino-acid chain: Multifunctional CCA protein (413 aa).

Positions 8 and 11 each coordinate ATP. Positions 8 and 11 each coordinate CTP. Mg(2+)-binding residues include Asp21 and Asp23. Arg91, Arg143, and Arg146 together coordinate ATP. Residues Arg91, Arg143, and Arg146 each coordinate CTP. The 102-residue stretch at 232–333 (TGVHVMMVVD…VRLFERSDAL (102 aa)) folds into the HD domain.

The protein belongs to the tRNA nucleotidyltransferase/poly(A) polymerase family. Bacterial CCA-adding enzyme type 1 subfamily. Monomer. Can also form homodimers and oligomers. Mg(2+) is required as a cofactor. It depends on Ni(2+) as a cofactor.

The enzyme catalyses a tRNA precursor + 2 CTP + ATP = a tRNA with a 3' CCA end + 3 diphosphate. The catalysed reaction is a tRNA with a 3' CCA end + 2 CTP + ATP = a tRNA with a 3' CCACCA end + 3 diphosphate. Its function is as follows. Catalyzes the addition and repair of the essential 3'-terminal CCA sequence in tRNAs without using a nucleic acid template. Adds these three nucleotides in the order of C, C, and A to the tRNA nucleotide-73, using CTP and ATP as substrates and producing inorganic pyrophosphate. tRNA 3'-terminal CCA addition is required both for tRNA processing and repair. Also involved in tRNA surveillance by mediating tandem CCA addition to generate a CCACCA at the 3' terminus of unstable tRNAs. While stable tRNAs receive only 3'-terminal CCA, unstable tRNAs are marked with CCACCA and rapidly degraded. This chain is Multifunctional CCA protein, found in Burkholderia cenocepacia (strain ATCC BAA-245 / DSM 16553 / LMG 16656 / NCTC 13227 / J2315 / CF5610) (Burkholderia cepacia (strain J2315)).